Consider the following 122-residue polypeptide: Diacylglycerol kinase (122 aa).

ATP contacts are provided by arginine 10 and tyrosine 17. Residues arginine 10, 14–19 (AAGYSW), and 23–26 (RAAW) contribute to the substrate site. An ATP-binding site is contributed by glutamate 29. Glutamate 29 serves as a coordination point for a divalent metal cation. Substrate contacts are provided by residues 31–35 (AFRQE), 48–51 (WLDV), arginine 56, and glutamate 70. A helical membrane pass occupies residues 35-55 (EGVAVLLAVVIACWLDVDAIT). A helical membrane pass occupies residues 57–77 (VLLISSVMLVMIVEILNSAIE). Glutamate 70 serves as the catalytic Proton acceptor. Residues glutamate 77, 86-88 (EYH), and 95-96 (KD) contribute to the ATP site. Residue glutamate 77 participates in a divalent metal cation binding. A helical membrane pass occupies residues 98 to 118 (GSAAVLIAIIVAVITWCILLW). Substrate-binding positions include serine 99 and 113 to 118 (WCILLW).

This sequence belongs to the bacterial diacylglycerol kinase family. Mg(2+) serves as cofactor.

The protein localises to the cell inner membrane. The catalysed reaction is a 1,2-diacyl-sn-glycerol + ATP = a 1,2-diacyl-sn-glycero-3-phosphate + ADP + H(+). Its function is as follows. Catalyzes the ATP-dependent phosphorylation of sn-l,2-diacylglycerol (DAG) to phosphatidic acid. Involved in the recycling of diacylglycerol produced as a by-product during membrane-derived oligosaccharide (MDO) biosynthesis. The polypeptide is Diacylglycerol kinase (dgkA) (Shigella flexneri).